A 149-amino-acid chain; its full sequence is MNKGQRHIKIREIIMNHDIETQDELVDRLREAGFNVTQATVSRDIKEMQLVKVPMANGRYKYSLPSDQRFNPLQKLKRALVDVFVKLDGTGNLLVLRTLPGNAHAVGVLLDNLDWNEIVGTICGDDTCLIICRTPKDAEKVSDQLLSML.

The protein belongs to the ArgR family.

Its subcellular location is the cytoplasm. It functions in the pathway amino-acid biosynthesis; L-arginine biosynthesis [regulation]. Regulates arginine biosynthesis genes. This is Arginine repressor from Geobacillus kaustophilus (strain HTA426).